The sequence spans 248 residues: Small ribosomal subunit protein uS3 (248 aa).

The region spanning 39-108 is the KH type-2 domain; that stretch reads IRKLVDKKLS…TVAVNVAEIP (70 aa). A disordered region spans residues 214-248; it reads ETIARPQRRNDERRPEGGDRANRRRPTARRRAGGE. The segment covering 221-234 has biased composition (basic and acidic residues); the sequence is RRNDERRPEGGDRA. Residues 235–248 are compositionally biased toward basic residues; sequence NRRRPTARRRAGGE.

The protein belongs to the universal ribosomal protein uS3 family. As to quaternary structure, part of the 30S ribosomal subunit. Forms a tight complex with proteins S10 and S14.

Binds the lower part of the 30S subunit head. Binds mRNA in the 70S ribosome, positioning it for translation. This is Small ribosomal subunit protein uS3 from Deinococcus deserti (strain DSM 17065 / CIP 109153 / LMG 22923 / VCD115).